The primary structure comprises 118 residues: Large ribosomal subunit protein bL20 (118 aa).

The protein belongs to the bacterial ribosomal protein bL20 family.

Functionally, binds directly to 23S ribosomal RNA and is necessary for the in vitro assembly process of the 50S ribosomal subunit. It is not involved in the protein synthesizing functions of that subunit. The polypeptide is Large ribosomal subunit protein bL20 (Oceanobacillus iheyensis (strain DSM 14371 / CIP 107618 / JCM 11309 / KCTC 3954 / HTE831)).